Reading from the N-terminus, the 312-residue chain is Acetyl-coenzyme A carboxylase carboxyl transferase subunit alpha (312 aa).

Positions 36–286 (RLDKEVKSIY…KEYFLDALRT (251 aa)) constitute a CoA carboxyltransferase C-terminal domain.

This sequence belongs to the AccA family. As to quaternary structure, acetyl-CoA carboxylase is a heterohexamer composed of biotin carboxyl carrier protein (AccB), biotin carboxylase (AccC) and two subunits each of ACCase subunit alpha (AccA) and ACCase subunit beta (AccD).

The protein resides in the cytoplasm. The catalysed reaction is N(6)-carboxybiotinyl-L-lysyl-[protein] + acetyl-CoA = N(6)-biotinyl-L-lysyl-[protein] + malonyl-CoA. Its pathway is lipid metabolism; malonyl-CoA biosynthesis; malonyl-CoA from acetyl-CoA: step 1/1. Functionally, component of the acetyl coenzyme A carboxylase (ACC) complex. First, biotin carboxylase catalyzes the carboxylation of biotin on its carrier protein (BCCP) and then the CO(2) group is transferred by the carboxyltransferase to acetyl-CoA to form malonyl-CoA. This is Acetyl-coenzyme A carboxylase carboxyl transferase subunit alpha from Helicobacter pylori (strain G27).